Reading from the N-terminus, the 132-residue chain is Small ribosomal subunit protein uS11 (132 aa).

It belongs to the universal ribosomal protein uS11 family. In terms of assembly, part of the 30S ribosomal subunit. Interacts with proteins S7 and S18. Binds to IF-3.

Located on the platform of the 30S subunit, it bridges several disparate RNA helices of the 16S rRNA. Forms part of the Shine-Dalgarno cleft in the 70S ribosome. The sequence is that of Small ribosomal subunit protein uS11 from Legionella pneumophila (strain Corby).